A 1158-amino-acid chain; its full sequence is Adipocyte enhancer-binding protein 1 (1158 aa).

The signal sequence occupies residues 1-25 (MAAVRGAPLLSCLLALLALCPGGRP). The segment at 41-387 (FLSELEPEPR…TPTEKVKCPP (347 aa)) is disordered. Over residues 45-55 (LEPEPREDDVE) the composition is skewed to acidic residues. Positions 100–110 (DKGPKVPKESL) are enriched in basic and acidic residues. Basic residues predominate over residues 116 to 166 (PPKKGKEKPPKATKKPKEKPPKATKKPKEKPPKATKKPKEKPPKATKKPPS). The segment covering 182-192 (PLPPPPSPGPE) has biased composition (pro residues). The segment covering 193–202 (ELPQEGGAPL) has biased composition (low complexity). A compositionally biased stretch (basic and acidic residues) spans 211 to 223 (EETHVEAREHQPE). Basic residues predominate over residues 252–266 (RQKQPRPPPSRRRRP). The segment covering 267 to 289 (ERVWPEPPEEKAPAPAPEERIEP) has biased composition (basic and acidic residues). Residues 290-300 (PVKPLLPPLPP) are compositionally biased toward pro residues. Over residues 326–371 (PDAERQTDEEKEELKKPKKEDSSPKEETDKWAVEKGKDHKEPRKGE) the composition is skewed to basic and acidic residues. Positions 383-540 (VKCPPIGMES…LCMRLEVLGC (158 aa)) constitute an F5/8 type C domain. Residues 390–555 (MESHRIEDNQ…YSYYAQNEVV (166 aa)) form a required for DNA-binding and interaction with NFKBIA region. The interaction with MAPK1 and MAPK3 stretch occupies residues 421 to 624 (TGATEDDYYD…EPEFRYTAGI (204 aa)). Asn528 carries an N-linked (GlcNAc...) asparagine glycan. Residues 555–985 (VATDDLDFRH…TQCNFILARS (431 aa)) form an interaction with PTEN region. Positions 563–904 (RHHSYKDMRQ…EALLTFMEQV (342 aa)) constitute a Peptidase M14 domain. Asn922 is a glycosylation site (N-linked (GlcNAc...) asparagine). The required for transcriptional repression stretch occupies residues 941–1158 (DYWRILNPGE…ETYTVNFGDF (218 aa)). Positions 1006–1158 (DPSRPMTPQQ…ETYTVNFGDF (153 aa)) are interaction with MAPK1 and MAPK3. Over residues 1108-1137 (EFETQLEPEFETQLEPEFEEEEEEEKEEEI) the composition is skewed to acidic residues. Residues 1108–1141 (EFETQLEPEFETQLEPEFEEEEEEEKEEEIATGQ) form a disordered region.

Belongs to the peptidase M14 family. As to quaternary structure, isoform 1: Interacts with different types of collagen, including collagens I, III, and V. Isoform 2: Interacts with GNG5, NFKBIA, MAPK1, MAPK3 and PTEN. Interaction with MAPK1 may stimulate DNA-binding. May interact with calmodulin. Binds to DNA in vitro. In terms of processing, phosphorylated by MAPK1 in vitro. Expressed in osteoblast and visceral fat.

Its subcellular location is the secreted. The protein localises to the cytoplasm. It localises to the nucleus. Functionally, as a positive regulator of collagen fibrillogenesis, it is probably involved in the organization and remodeling of the extracellular matrix. In terms of biological role, may positively regulate MAP-kinase activity in adipocytes, leading to enhanced adipocyte proliferation and reduced adipocyte differentiation. May also positively regulate NF-kappa-B activity in macrophages by promoting the phosphorylation and subsequent degradation of I-kappa-B-alpha (NFKBIA), leading to enhanced macrophage inflammatory responsiveness. Can act as a transcriptional repressor. This Homo sapiens (Human) protein is Adipocyte enhancer-binding protein 1 (AEBP1).